The primary structure comprises 64 residues: Sec-independent protein translocase protein TatA (64 aa).

The helical transmembrane segment at Leu-10–Gly-30 threads the bilayer.

It belongs to the TatA/E family. Forms a complex with TatC.

The protein localises to the cell membrane. Its function is as follows. Part of the twin-arginine translocation (Tat) system that transports large folded proteins containing a characteristic twin-arginine motif in their signal peptide across membranes. TatA could form the protein-conducting channel of the Tat system. The protein is Sec-independent protein translocase protein TatA of Alkaliphilus oremlandii (strain OhILAs) (Clostridium oremlandii (strain OhILAs)).